Here is a 618-residue protein sequence, read N- to C-terminus: Grainyhead-like protein 1 homolog (618 aa).

The interval 1–91 (MTQEYDNKRP…EGEHPEPEHS (91 aa)) is transcription activation. Basic and acidic residues predominate over residues 76–92 (SSAVKPEGEHPEPEHSK). The tract at residues 76-100 (SSAVKPEGEHPEPEHSKRNSIPNVT) is disordered. At threonine 208 the chain carries Phosphothreonine. One can recognise a Grh/CP2 DB domain in the interval 248 to 474 (SGNNFEYTLE…DLDTQPVLFI (227 aa)). 2 interaction with DNA regions span residues 380–389 (TDFSSQKGVK) and 427–430 (RKIR).

Belongs to the grh/CP2 family. Grainyhead subfamily. In terms of assembly, binds DNA as homodimer. Homodimer, also forms heterodimers with GRHL2 or GRHL3. Post-translationally, methylation at Arg-9 and Lys-116 may be involved in regulating transcriptional activation. In terms of tissue distribution, isoform 1 is highly expressed in brain, pancreas, tonsil, placenta and kidney. Isoform 2 is highly expressed in brain and liver. Expression in the skin is confined to the suprabasal layers of the epidermis and to the hair follicles.

It is found in the nucleus. Functionally, transcription factor involved in epithelial development. Binds directly to the consensus DNA sequence 5'-AACCGGTT-3'. Important regulator of DSG1 in the context of hair anchorage and epidermal differentiation, participates in the maintenance of the skin barrier. There is no genetic interaction with GRHL3, nor functional cooperativity due to diverse target gene selectivity during epithelia development. May play a role in regulating glucose homeostasis and insulin signaling. This is Grainyhead-like protein 1 homolog from Mus musculus (Mouse).